The sequence spans 190 residues: Elongation factor P-like protein (190 aa).

It belongs to the elongation factor P family.

The polypeptide is Elongation factor P-like protein (Marinomonas sp. (strain MWYL1)).